A 126-amino-acid polypeptide reads, in one-letter code: Aspartate 1-decarboxylase (126 aa).

S25 serves as the catalytic Schiff-base intermediate with substrate; via pyruvic acid. S25 is subject to Pyruvic acid (Ser). T57 provides a ligand contact to substrate. Y58 functions as the Proton donor in the catalytic mechanism. 73-75 (GAA) lines the substrate pocket.

Belongs to the PanD family. In terms of assembly, heterooctamer of four alpha and four beta subunits. The cofactor is pyruvate. Post-translationally, is synthesized initially as an inactive proenzyme, which is activated by self-cleavage at a specific serine bond to produce a beta-subunit with a hydroxyl group at its C-terminus and an alpha-subunit with a pyruvoyl group at its N-terminus.

It is found in the cytoplasm. The enzyme catalyses L-aspartate + H(+) = beta-alanine + CO2. Its pathway is cofactor biosynthesis; (R)-pantothenate biosynthesis; beta-alanine from L-aspartate: step 1/1. In terms of biological role, catalyzes the pyruvoyl-dependent decarboxylation of aspartate to produce beta-alanine. This is Aspartate 1-decarboxylase from Alkalilimnicola ehrlichii (strain ATCC BAA-1101 / DSM 17681 / MLHE-1).